The primary structure comprises 577 residues: Moesin (577 aa).

An FERM domain is found at 2–295; sequence PKTISVRVTT…GNHELYMRRR (294 aa). Ser-74 is subject to Phosphoserine. Lys-79 is subject to N6-acetyllysine. The residue at position 83 (Lys-83) is an N6-succinyllysine. Residues 115–120 carry the [IL]-x-C-x-x-[DE] motif motif; that stretch reads IYCPPE. Phosphotyrosine is present on Tyr-116. Position 117 is an S-nitrosocysteine (Cys-117). N6-acetyllysine occurs at positions 139 and 165. 3 disordered regions span residues 322 to 342, 358 to 453, and 468 to 549; these read LLEN…KIER, TKKA…QMVQ, and STPH…AENM. Residues 358–401 show a composition bias toward basic and acidic residues; the sequence is TKKAQQELEEQTRRALELEQERKRAQSEAEKLAKERQEAEEAKE. Ser-407 bears the Phosphoserine mark. Composition is skewed to basic and acidic residues over residues 438-447 and 492-519; these read KESEAEECHQ and AELR…ERVQ. Ser-527 carries the phosphoserine modification. Residues 531–549 are compositionally biased toward basic and acidic residues; sequence NARDESKKTTNDMIHAENM. Thr-558 is modified (phosphothreonine; by ROCK2 and STK10).

In resting T-cells, part of a PAG1-NHERF1-MSN complex which is disrupted upon TCR activation. Interacts with NHERF1. Interacts with PPP1R16B. Interacts with PDZD8. Interacts with SELPLG and SYK; these interactions mediate the activation of SYK by SELPLG. Interacts with PDPN (via cytoplasmic domain); this interaction activates RHOA and promotes epithelial-mesenchymal transition. Interacts with SPN/CD43 cytoplasmic tail. Interacts with CD44. Interacts with ICAM2. Interacts with ICAM3 (via C-terminus). Interacts with PDZD8. Interacts with F-actin. Interacts with CD46. Interacts with PTPN6. Phosphorylation on Thr-558 is crucial for the formation of microvilli-like structures. Phosphorylation by ROCK2 suppresses the head-to-tail association of the N-terminal and C-terminal halves resulting in an opened conformation which is capable of actin and membrane-binding. Phosphorylation on Thr-558 by STK10 negatively regulates lymphocyte migration and polarization. In terms of processing, S-nitrosylation of Cys-117 is induced by interferon-gamma and oxidatively-modified low-densitity lipoprotein (LDL(ox)) implicating the iNOS-S100A8/9 transnitrosylase complex.

It localises to the cell membrane. Its subcellular location is the cytoplasm. The protein resides in the cytoskeleton. It is found in the apical cell membrane. The protein localises to the cell projection. It localises to the microvillus membrane. Its subcellular location is the microvillus. A head-to-tail association, of the N-terminal and C-terminal halves results in a closed conformation (inactive form) which is incapable of actin or membrane-binding. Ezrin-radixin-moesin (ERM) family protein that connects the actin cytoskeleton to the plasma membrane and thereby regulates the structure and function of specific domains of the cell cortex. Tethers actin filaments by oscillating between a resting and an activated state providing transient interactions between moesin and the actin cytoskeleton. Once phosphorylated on its C-terminal threonine, moesin is activated leading to interaction with F-actin and cytoskeletal rearrangement. These rearrangements regulate many cellular processes, including cell shape determination, membrane transport, and signal transduction. The role of moesin is particularly important in immunity acting on both T and B-cells homeostasis and self-tolerance, regulating lymphocyte egress from lymphoid organs. Modulates phagolysosomal biogenesis in macrophages. Participates also in immunologic synapse formation. This chain is Moesin, found in Rattus norvegicus (Rat).